The primary structure comprises 137 residues: Small ribosomal subunit protein uS9 (137 aa).

The disordered stretch occupies residues 105–137; that stretch reads LKAEGYLTRDPRAKERKKYGLHKARKAPQYSKR. Positions 118 to 137 are enriched in basic residues; it reads KERKKYGLHKARKAPQYSKR.

It belongs to the universal ribosomal protein uS9 family.

This chain is Small ribosomal subunit protein uS9 (rpsI), found in Synechocystis sp. (strain ATCC 27184 / PCC 6803 / Kazusa).